A 1131-amino-acid polypeptide reads, in one-letter code: DNA polymerase II large subunit (1131 aa).

It belongs to the archaeal DNA polymerase II family. As to quaternary structure, heterodimer of a large subunit and a small subunit.

The catalysed reaction is DNA(n) + a 2'-deoxyribonucleoside 5'-triphosphate = DNA(n+1) + diphosphate. It carries out the reaction Exonucleolytic cleavage in the 3'- to 5'-direction to yield nucleoside 5'-phosphates.. Functionally, possesses two activities: a DNA synthesis (polymerase) and an exonucleolytic activity that degrades single-stranded DNA in the 3'- to 5'-direction. Has a template-primer preference which is characteristic of a replicative DNA polymerase. The polypeptide is DNA polymerase II large subunit (Methanococcus maripaludis (strain DSM 14266 / JCM 13030 / NBRC 101832 / S2 / LL)).